Reading from the N-terminus, the 1020-residue chain is 26S proteasome non-ATPase regulatory subunit 1 (1020 aa).

A disordered region spans residues 279–322 (TALPSTFKPQGTTSEDGAKSEGDKSKSDEDITEETPADDKVERT). Polar residues predominate over residues 281 to 293 (LPSTFKPQGTTSE). At threonine 291 the chain carries Phosphothreonine. The span at 294 to 307 (DGAKSEGDKSKSDE) shows a compositional bias: basic and acidic residues. 3 positions are modified to phosphoserine: serine 298, serine 303, and serine 305. Threonine 310 is subject to Phosphothreonine. PC repeat units lie at residues 418–452 (TATA…SSGY), 456–489 (GALY…ENVR), 491–525 (GGCL…VTGE), 526–560 (AAGI…EKIL), 562–595 (GLAV…VLRR), 596–631 (SGMY…DVRR), 632–664 (AAVT…PHVR), 666–701 (GAAM…FVRQ), 702–742 (GALI…DVMA), and 745–777 (GAIL…QAVV). Disordered regions lie at residues 855 to 950 (QKRR…NPAR) and 999 to 1020 (FGPM…YIED). Composition is skewed to basic and acidic residues over residues 858–867 (RENADKKEDE) and 876–939 (KEGA…KEPE). Over residues 1003 to 1020 (NDEEKEPEPPEPFEYIED) the composition is skewed to acidic residues.

This sequence belongs to the proteasome subunit S1 family.

Functionally, acts as a regulatory subunit of the 26S proteasome which is involved in the ATP-dependent degradation of ubiquitinated proteins. This Drosophila melanogaster (Fruit fly) protein is 26S proteasome non-ATPase regulatory subunit 1 (Rpn2).